The sequence spans 3623 residues: Cubilin (3623 aa).

Positions 1–23 (MMNMSLPFLWSLLTLLIFAEVNG) are cleaved as a signal peptide. Positions 24–35 (EAGELELQRQKR) are cleaved as a propeptide — removed in mature form. Positions 42–49 (PRMATERG) are interaction with AMN. Residue Asn-105 is glycosylated (N-linked (GlcNAc...) asparagine). The region spanning 132–168 (DKKVCSSNPCQNGGTCLNLHDSFFCICPPQWKGPLCS) is the EGF-like 1 domain. Cystine bridges form between Cys-136–Cys-147, Cys-141–Cys-156, Cys-158–Cys-167, Cys-174–Cys-190, Cys-184–Cys-199, Cys-201–Cys-210, Cys-267–Cys-280, Cys-274–Cys-289, and Cys-292–Cys-303. In terms of domain architecture, EGF-like 2; calcium-binding spans 170–211 (DVNECEIYSGTPLSCQNGGTCVNTMGSYSCHCPPETYGPQCA). Residues 263-304 (DRDECSFQPGPCSTLVQCFNTQGSFYCGACPTGWQGNGYICE) form the EGF-like 3; calcium-binding domain. The EGF-like 4; calcium-binding domain occupies 305–348 (DINECEINNGGCSVAPPVECVNTPGSSHCQACPPGYQGDGRVCT). EGF-like domains are found at residues 349 to 385 (LTDI…YTGN) and 395 to 430 (LSNI…VNCT). Intrachain disulfides connect Cys-353–Cys-366, Cys-360–Cys-376, Cys-399–Cys-409, Cys-404–Cys-418, Cys-420–Cys-429, Cys-436–Cys-447, Cys-441–Cys-456, Cys-458–Cys-467, Cys-474–Cys-500, Cys-527–Cys-549, Cys-590–Cys-616, Cys-643–Cys-665, and Cys-708–Cys-734. Residue Asn-428 is glycosylated (N-linked (GlcNAc...) asparagine). Residues 432–468 (NINECLSNPCLNGGTCVDGVDSFSCECTRLWTGALCQ) enclose the EGF-like 7; calcium-binding domain. 27 CUB domains span residues 474–586 (CGES…WETQ), 590–702 (CGGI…YLTS), 708–816 (CGGN…YQVA), 816–928 (ACGD…FSAE), 932–1042 (CGEI…YEAI), 1048–1161 (CLQD…WDGS), 1165–1277 (CGGN…YRQT), 1278–1389 (CENV…WFVY), 1391–1506 (CGGE…WQAV), 1510–1619 (CGGI…FRQA), 1620–1734 (CGGH…VTAS), 1738–1850 (CGGT…FMKI), 1852–1963 (GNDN…WFAV), 1978–2091 (CGGF…FHKS), 2092–2213 (CGGY…YEAK), 2217–2334 (CGGN…YSIA), 2336–2448 (CGGR…FESS), 2452–2565 (CGGD…YTSS), 2570–2687 (CGGS…YSFT), 2689–2801 (CGGI…WNTQ), 2805–2919 (CGGI…FVSR), 2920–3035 (CGSN…YRII), 3037–3150 (CGGV…FRQT), 3157–3274 (CGGY…YTIM), 3278–3393 (CGGT…YQIA), 3395–3507 (CNRD…WTSS), and 3511–3623 (CGGT…TWDS). The N-linked (GlcNAc...) asparagine glycan is linked to Asn-482. N-linked (GlcNAc...) asparagine glycosylation is found at Asn-711, Asn-749, Asn-781, and Asn-857. 2 disulfides stabilise this stretch: Cys-869–Cys-891 and Cys-932–Cys-958. N-linked (GlcNAc...) asparagine glycosylation is present at Asn-957. Position 980 (Glu-980) interacts with Ca(2+). An N-linked (GlcNAc...) asparagine glycan is attached at Asn-984. The cysteines at positions 985 and 1005 are disulfide-linked. Ca(2+) contacts are provided by Asp-988, Asp-1027, Asp-1029, and Leu-1030. Cysteines 1048 and 1074 form a disulfide. N-linked (GlcNAc...) asparagine glycosylation is present at Asn-1092. Glu-1096, Asp-1105, Asp-1146, Ile-1148, and Asp-1149 together coordinate Ca(2+). A disulfide bridge links Cys-1165 with Cys-1191. An N-linked (GlcNAc...) asparagine glycan is attached at Asn-1168. Position 1213 (Glu-1213) interacts with Ca(2+). The N-linked (GlcNAc...) asparagine glycan is linked to Asn-1217. Cys-1218 and Cys-1240 are joined by a disulfide. Residues Asp-1221, Asp-1262, Gly-1264, and Gln-1265 each contribute to the Ca(2+) site. Residues Cys-1278 and Cys-1306 are joined by a disulfide bond. 3 N-linked (GlcNAc...) asparagine glycosylation sites follow: Asn-1285, Asn-1307, and Asn-1319. Position 1328 (Glu-1328) interacts with Ca(2+). An N-linked (GlcNAc...) asparagine glycan is attached at Asn-1332. A disulfide bridge links Cys-1333 with Cys-1351. Positions 1336, 1373, and 1375 each coordinate Ca(2+). 2 disulfides stabilise this stretch: Cys-1391-Cys-1417 and Cys-1444-Cys-1466. Asn-1500 is a glycosylation site (N-linked (GlcNAc...) asparagine). Cys-1510 and Cys-1536 are disulfide-bonded. The N-linked (GlcNAc...) asparagine glycan is linked to Asn-1551. Disulfide bonds link Cys-1563–Cys-1581, Cys-1620–Cys-1647, Cys-1675–Cys-1697, Cys-1738–Cys-1764, and Cys-1791–Cys-1812. Asn-1646 carries an N-linked (GlcNAc...) asparagine glycan. N-linked (GlcNAc...) asparagine glycosylation is found at Asn-1802, Asn-1819, and Asn-1885. 3 cysteine pairs are disulfide-bonded: Cys-1905-Cys-1927, Cys-1978-Cys-2006, and Cys-2032-Cys-2054. Asn-2085 and Asn-2117 each carry an N-linked (GlcNAc...) asparagine glycan. Intrachain disulfides connect Cys-2092-Cys-2118 and Cys-2217-Cys-2247. Residue Asn-2274 is glycosylated (N-linked (GlcNAc...) asparagine). Intrachain disulfides connect Cys-2275/Cys-2297 and Cys-2336/Cys-2363. N-linked (GlcNAc...) asparagine glycosylation is found at Asn-2386 and Asn-2400. Cystine bridges form between Cys-2390–Cys-2411, Cys-2452–Cys-2478, and Cys-2505–Cys-2527. Residues Asn-2531, Asn-2581, Asn-2592, and Asn-2610 are each glycosylated (N-linked (GlcNAc...) asparagine). Residues Cys-2570 and Cys-2599 are joined by a disulfide bond. 7 disulfides stabilise this stretch: Cys-2628/Cys-2649, Cys-2689/Cys-2715, Cys-2742/Cys-2764, Cys-2805/Cys-2831, Cys-2860/Cys-2883, Cys-2920/Cys-2946, and Cys-2977/Cys-2999. N-linked (GlcNAc...) asparagine glycosylation occurs at Asn-2813. N-linked (GlcNAc...) asparagine glycans are attached at residues Asn-2923 and Asn-2945. Residue Thr-3008 is modified to Phosphothreonine. Cystine bridges form between Cys-3037–Cys-3064 and Cys-3091–Cys-3113. Residues Asn-3042, Asn-3103, Asn-3125, and Asn-3165 are each glycosylated (N-linked (GlcNAc...) asparagine). Cystine bridges form between Cys-3157/Cys-3185 and Cys-3215/Cys-3237. 4 N-linked (GlcNAc...) asparagine glycosylation sites follow: Asn-3268, Asn-3283, Asn-3290, and Asn-3295. 2 disulfide bridges follow: Cys-3278/Cys-3306 and Cys-3332/Cys-3354. Asn-3357 carries an N-linked (GlcNAc...) asparagine glycan. A disulfide bridge connects residues Cys-3395 and Cys-3421. Residues Asn-3430, Asn-3457, Asn-3533, and Asn-3576 are each glycosylated (N-linked (GlcNAc...) asparagine). 3 disulfide bridges follow: Cys-3448/Cys-3470, Cys-3511/Cys-3537, and Cys-3564/Cys-3586.

Interacts with AMN. Component of the cubam complex composed of one CUBN trimer and one AMN chain. The cubam complex can dimerize. Interacts with LRP2 in a dual-receptor complex in a calcium-dependent manner. Found in a complex with PID1/PCLI1, LRP1 and CUBNI. Interacts with LRP1 and PID1/PCLI1. The precursor is cleaved by a trans-Golgi proteinase furin, removing a propeptide. In terms of processing, N-glycosylated. Detected in kidney cortex (at protein level). Expressed in kidney proximal tubule cells, placenta, visceral yolk-sac cells and in absorptive intestinal cells. Expressed in the epithelium of intestine and kidney.

It localises to the apical cell membrane. The protein resides in the cell membrane. It is found in the membrane. Its subcellular location is the coated pit. The protein localises to the endosome. It localises to the lysosome membrane. Endocytic receptor which plays a role in lipoprotein, vitamin and iron metabolism by facilitating their uptake. Acts together with LRP2 to mediate endocytosis of high-density lipoproteins, GC, hemoglobin, ALB, TF and SCGB1A1. Acts together with AMN to mediate endocytosis of the CBLIF-cobalamin complex. Binds to ALB, MB, Kappa and lambda-light chains, TF, hemoglobin, GC, SCGB1A1, APOA1, high density lipoprotein, and the CBLIF-cobalamin complex. Ligand binding requires calcium. Serves as important transporter in several absorptive epithelia, including intestine, renal proximal tubules and embryonic yolk sac. May play an important role in the development of the peri-implantation embryo through internalization of APOA1 and cholesterol. Binds to LGALS3 at the maternal-fetal interface. In Homo sapiens (Human), this protein is Cubilin (CUBN).